A 662-amino-acid chain; its full sequence is ABC transporter G family member 25 (662 aa).

Positions 1 to 30 are disordered; it reads MSAFDGVENQMNGPDSSPRLSQDPREPRSL. The span at 9-20 shows a compositional bias: polar residues; sequence NQMNGPDSSPRL. Asparagine 56 is a glycosylation site (N-linked (GlcNAc...) asparagine). An ABC transporter domain is found at 69–308; the sequence is QKPSDETRST…FESVGFSPAF (240 aa). 101–108 contacts ATP; sequence GPSGSGKS. N-linked (GlcNAc...) asparagine glycosylation is present at asparagine 122. 7 helical membrane-spanning segments follow: residues 374–394, 406–426, 437–457, 489–509, 522–542, 547–567, and 629–649; these read VNGG…CILL, FDLL…LMWW, LGLL…NAVF, LSME…MVYL, VLLL…AAIM, ASTI…YYVN, and VIGD…FFGY. The ABC transmembrane type-2 domain occupies 388–594; sequence SQLCILLHRL…CYRLLVAIQY (207 aa).

The protein belongs to the ABC transporter superfamily. ABCG family. Eye pigment precursor importer (TC 3.A.1.204) subfamily. As to expression, mainly expressed in vascular tissues,predominantly in phloem companion cells, with highest levels in roots and seeds, and lower levels in seedlings, stems, leaves and flowers. Mostly observed in inflorescence meristems relative to cauline leaves and developing siliques. In seeds, mainly expressed in the endosperm and, to a lesser extent, in the embryo.

It is found in the cell membrane. The catalysed reaction is abscisate(in) + ATP + H2O = abscisate(out) + ADP + phosphate + H(+). Its activity is regulated as follows. ADP and vanadate (ABC transporters inhibitor) inhibit the ATP-dependent abscisic acid (ABA) uptake. Functionally, high affinity abscisic acid (ABA) transporter that mediates the export of ABA, with a preference for (+)-ABA, through the plasma membrane, especially in vascular tissues (e.g. phloem companion cells), and is involved in the intercellular ABA signaling pathway. Together with ABCG31, export ABA from the endosperm to deliver it to the embryo via ABCG30 and ABCG40-mediated import to suppress radicle extension and subsequent embryonic growth. This is ABC transporter G family member 25 from Arabidopsis thaliana (Mouse-ear cress).